We begin with the raw amino-acid sequence, 329 residues long: L-lactate dehydrogenase (329 aa).

NAD(+)-binding positions include Val18, Glu39, Lys46, Tyr71, and 85–86; that span reads GA. 2 residues coordinate substrate: Gln88 and Arg94. NAD(+) contacts are provided by residues Ser107, 124–126, and Ser149; that span reads AAN. 126-129 serves as a coordination point for substrate; that stretch reads NPVD. 154 to 157 lines the substrate pocket; it reads DSAR. Residues Arg159 and His174 each contribute to the beta-D-fructose 1,6-bisphosphate site. His181 (proton acceptor) is an active-site residue. Position 226 is a phosphotyrosine (Tyr226). Thr235 is a binding site for substrate.

Belongs to the LDH/MDH superfamily. LDH family. As to quaternary structure, homotetramer.

Its subcellular location is the cytoplasm. It carries out the reaction (S)-lactate + NAD(+) = pyruvate + NADH + H(+). Its pathway is fermentation; pyruvate fermentation to lactate; (S)-lactate from pyruvate: step 1/1. Its activity is regulated as follows. Allosterically activated by fructose 1,6-bisphosphate (FBP). Its function is as follows. Catalyzes the conversion of lactate to pyruvate. The chain is L-lactate dehydrogenase from Streptococcus agalactiae serotype V (strain ATCC BAA-611 / 2603 V/R).